We begin with the raw amino-acid sequence, 86 residues long: Cytochrome c oxidase subunit 3 (86 aa).

At 1-15 the chain is on the mitochondrial matrix side; that stretch reads MAHQAHSYHMVDPSP. A helical transmembrane segment spans residues 16-34; it reads WPIFGAAAALLTTSGLVMW. At 35–40 the chain is on the mitochondrial intermembrane side; it reads FHYNSS. A helical membrane pass occupies residues 41-66; it reads ILLAAGLLSMLLVMLQWWREIVREST. Over 67 to 86 the chain is Mitochondrial matrix; that stretch reads FQGHHTPTVQKGLRYGMILF.

Belongs to the cytochrome c oxidase subunit 3 family. As to quaternary structure, component of the cytochrome c oxidase (complex IV, CIV), a multisubunit enzyme composed of 14 subunits. The complex is composed of a catalytic core of 3 subunits MT-CO1, MT-CO2 and MT-CO3, encoded in the mitochondrial DNA, and 11 supernumerary subunits COX4I, COX5A, COX5B, COX6A, COX6B, COX6C, COX7A, COX7B, COX7C, COX8 and NDUFA4, which are encoded in the nuclear genome. The complex exists as a monomer or a dimer and forms supercomplexes (SCs) in the inner mitochondrial membrane with NADH-ubiquinone oxidoreductase (complex I, CI) and ubiquinol-cytochrome c oxidoreductase (cytochrome b-c1 complex, complex III, CIII), resulting in different assemblies (supercomplex SCI(1)III(2)IV(1) and megacomplex MCI(2)III(2)IV(2)).

The protein resides in the mitochondrion inner membrane. It carries out the reaction 4 Fe(II)-[cytochrome c] + O2 + 8 H(+)(in) = 4 Fe(III)-[cytochrome c] + 2 H2O + 4 H(+)(out). Its function is as follows. Component of the cytochrome c oxidase, the last enzyme in the mitochondrial electron transport chain which drives oxidative phosphorylation. The respiratory chain contains 3 multisubunit complexes succinate dehydrogenase (complex II, CII), ubiquinol-cytochrome c oxidoreductase (cytochrome b-c1 complex, complex III, CIII) and cytochrome c oxidase (complex IV, CIV), that cooperate to transfer electrons derived from NADH and succinate to molecular oxygen, creating an electrochemical gradient over the inner membrane that drives transmembrane transport and the ATP synthase. Cytochrome c oxidase is the component of the respiratory chain that catalyzes the reduction of oxygen to water. Electrons originating from reduced cytochrome c in the intermembrane space (IMS) are transferred via the dinuclear copper A center (CU(A)) of subunit 2 and heme A of subunit 1 to the active site in subunit 1, a binuclear center (BNC) formed by heme A3 and copper B (CU(B)). The BNC reduces molecular oxygen to 2 water molecules using 4 electrons from cytochrome c in the IMS and 4 protons from the mitochondrial matrix. The protein is Cytochrome c oxidase subunit 3 (MT-CO3) of Anas platyrhynchos (Mallard).